Here is a 553-residue protein sequence, read N- to C-terminus: Peroxiredoxin-2A (553 aa).

In terms of domain architecture, Thioredoxin spans 4–160 (IDVGDFVPDG…LMKMTTTTMS (157 aa)). Catalysis depends on cysteine 51, which acts as the Cysteine sulfenic acid (-SOH) intermediate. In terms of domain architecture, F-box spans 156–201 (TTTMSNLPTDLLEEIISRVPRKYMRAVRLTCKRWNGMFKSQSFTKM).

It belongs to the peroxiredoxin family. Prx5 subfamily. Monomer.

The catalysed reaction is [glutaredoxin]-dithiol + a hydroperoxide = [glutaredoxin]-disulfide + an alcohol + H2O. In terms of biological role, thiol-specific peroxidase that catalyzes the reduction of hydrogen peroxide and organic hydroperoxides to water and alcohols, respectively. Plays a role in cell protection against oxidative stress by detoxifying peroxides. May be involved in intracellular redox signaling. This Arabidopsis thaliana (Mouse-ear cress) protein is Peroxiredoxin-2A (PRXIIA).